Consider the following 168-residue polypeptide: Alkyl hydroperoxide reductase C (168 aa).

The region spanning 1–138 (EFIEVSEESF…LVNKIKAAQY (138 aa)) is the Thioredoxin domain. Cysteine 28 functions as the Cysteine sulfenic acid (-SOH) intermediate in the catalytic mechanism.

The protein belongs to the peroxiredoxin family. AhpC/Prx1 subfamily. In terms of assembly, homodimer; disulfide-linked, upon oxidation. 5 homodimers assemble to form a ring-like decamer.

It is found in the cytoplasm. The enzyme catalyses a hydroperoxide + NADH + H(+) = an alcohol + NAD(+) + H2O. In terms of biological role, thiol-specific peroxidase that catalyzes the reduction of hydrogen peroxide and organic hydroperoxides to water and alcohols, respectively. Plays a role in cell protection against oxidative stress by detoxifying peroxides. This chain is Alkyl hydroperoxide reductase C, found in Ferdinandcohnia aciditolerans (strain JCM 32973 / CCTCC AB 2017280 / YN-1) (Bacillus aciditolerans).